The sequence spans 469 residues: Neuraminidase (469 aa).

Residues 1-9 are Intravirion-facing; it reads MNPNQKIIT. A helical transmembrane segment spans residues 10-30; it reads IGSVSLTIATVCFLMQIAILV. The segment at 11–33 is involved in apical transport and lipid raft association; that stretch reads GSVSLTIATVCFLMQIAILVTTV. The Virion surface portion of the chain corresponds to 31-469; that stretch reads TTVTLHFKQY…DGADINLMPI (439 aa). The hypervariable stalk region stretch occupies residues 36 to 88; it reads HFKQYECDSPANNQVMPCEPIIIERNITEIVYLTNTTIEKEICPKLVEYRNWS. 3 N-linked (GlcNAc...) asparagine; by host glycosylation sites follow: Asn61, Asn70, and Asn86. The segment at 91-469 is head of neuraminidase; sequence QCKITGFAPF…DGADINLMPI (379 aa). Intrachain disulfides connect Cys92-Cys417, Cys124-Cys129, Cys183-Cys230, Cys232-Cys237, Cys278-Cys291, Cys280-Cys289, Cys318-Cys337, and Cys421-Cys447. Arg118 lines the substrate pocket. N-linked (GlcNAc...) asparagine; by host glycosylation is present at Asn146. Asp151 functions as the Proton donor/acceptor in the catalytic mechanism. Arg152 serves as a coordination point for substrate. 2 N-linked (GlcNAc...) asparagine; by host glycosylation sites follow: Asn200 and Asn234. 276-277 lines the substrate pocket; that stretch reads EE. Arg292 is a substrate binding site. Positions 293, 297, and 324 each coordinate Ca(2+). The tract at residues 326–350 is disordered; it reads PRNNDRSSNSNCRNPNNDKGNHGVK. Residues 331–343 show a composition bias toward low complexity; it reads RSSNSNCRNPNND. Arg371 contacts substrate. N-linked (GlcNAc...) asparagine; by host glycosylation occurs at Asn402. The active-site Nucleophile is the Tyr406.

It belongs to the glycosyl hydrolase 34 family. Homotetramer. Requires Ca(2+) as cofactor. Post-translationally, N-glycosylated.

The protein localises to the virion membrane. The protein resides in the host apical cell membrane. It catalyses the reaction Hydrolysis of alpha-(2-&gt;3)-, alpha-(2-&gt;6)-, alpha-(2-&gt;8)- glycosidic linkages of terminal sialic acid residues in oligosaccharides, glycoproteins, glycolipids, colominic acid and synthetic substrates.. With respect to regulation, inhibited by the neuraminidase inhibitors zanamivir (Relenza) and oseltamivir (Tamiflu). These drugs interfere with the release of progeny virus from infected cells and are effective against all influenza strains. Resistance to neuraminidase inhibitors is quite rare. Functionally, catalyzes the removal of terminal sialic acid residues from viral and cellular glycoconjugates. Cleaves off the terminal sialic acids on the glycosylated HA during virus budding to facilitate virus release. Additionally helps virus spread through the circulation by further removing sialic acids from the cell surface. These cleavages prevent self-aggregation and ensure the efficient spread of the progeny virus from cell to cell. Otherwise, infection would be limited to one round of replication. Described as a receptor-destroying enzyme because it cleaves a terminal sialic acid from the cellular receptors. May facilitate viral invasion of the upper airways by cleaving the sialic acid moieties on the mucin of the airway epithelial cells. Likely to plays a role in the budding process through its association with lipid rafts during intracellular transport. May additionally display a raft-association independent effect on budding. Plays a role in the determination of host range restriction on replication and virulence. Sialidase activity in late endosome/lysosome traffic seems to enhance virus replication. This chain is Neuraminidase, found in Aves (whales).